Reading from the N-terminus, the 1042-residue chain is Aldehyde reductase lnaA (1042 aa).

Residues 29-425 (HAFLNPSAMA…GRRDHQVKVR (397 aa)) are adenylation (A) domain. The 78-residue stretch at 532 to 609 (DNEDSTRGKL…RLAGILEERI (78 aa)) folds into the Carrier domain. Residue serine 569 is modified to O-(pantetheine 4'-phosphoryl)serine. The short-chain dehydrogenase/reductase (R) domain stretch occupies residues 655–897 (LTGATGFVGS…FVPVDYVNAV (243 aa)).

The protein belongs to the NRP synthetase family.

The catalysed reaction is L-tyrosinal + AMP + diphosphate + NADP(+) = L-tyrosine + ATP + NADPH + H(+). The protein operates within secondary metabolite biosynthesis. Non-canonical nonribosomal peptide synthetase; part of the lna gene cluster that mediates the biosynthesis of diastereomeric piperazines. Lna and lnb clusters encode sets of enzymes that produce overlapping sets of previously undescribed metabolites such as piperazinomycin-like metabolites or morpholine. The lna and lnb biosynthetic pathways appear to be part of a signaling network that controls the formation of sclerotia, a resilient overwintering structure. One primary function of the non-canonical nonribosomal peptide synthetases lnaA and lnbA consists in the reduction of L-tyrosine. The presence in the clusters of tailoring enzymes such as the oxidoreductases lnaB, lnbB, lnaE or lnbE, as well as of the cytochrome P450 monooxygenases lnaC, lnaD, or lnbC, might explain formation of various diastereomeric piperazines. This chain is Aldehyde reductase lnaA, found in Aspergillus flavus (strain ATCC 200026 / FGSC A1120 / IAM 13836 / NRRL 3357 / JCM 12722 / SRRC 167).